The primary structure comprises 119 residues: Large ribosomal subunit protein bL12 (119 aa).

The protein belongs to the bacterial ribosomal protein bL12 family. Homodimer. Part of the ribosomal stalk of the 50S ribosomal subunit. Forms a multimeric L10(L12)X complex, where L10 forms an elongated spine to which 2 to 4 L12 dimers bind in a sequential fashion. Binds GTP-bound translation factors.

In terms of biological role, forms part of the ribosomal stalk which helps the ribosome interact with GTP-bound translation factors. Is thus essential for accurate translation. This Colwellia psychrerythraea (strain 34H / ATCC BAA-681) (Vibrio psychroerythus) protein is Large ribosomal subunit protein bL12.